Here is a 457-residue protein sequence, read N- to C-terminus: Multidrug resistance protein MdtK (457 aa).

The Cytoplasmic segment spans residues 1 to 10 (MQKYISEARL). Residues 11-31 (LLALAIPVILAQIAQTAMGFV) traverse the membrane as a helical segment. The Periplasmic segment spans residues 32–52 (DTVMAGGYSATDMAAVAIGTS). Residues 53 to 73 (IWLPAILFGHGLLLALTPVIA) form a helical membrane-spanning segment. Over 74-92 (QLNGSGRRERIAHQVRQGF) the chain is Cytoplasmic. A helical membrane pass occupies residues 93-113 (WLAGFVSVLIMLVLWNAGYII). Residues 114-126 (RSMENIDPALADK) lie on the Periplasmic side of the membrane. A helical membrane pass occupies residues 127-147 (AVGYLRALLWGAPGYLFFQVA). The Cytoplasmic portion of the chain corresponds to 148–159 (RNQCEGLAKTKP). A helical membrane pass occupies residues 160-180 (GMVMGFIGLLVNIPVNYIFIY). The Periplasmic segment spans residues 181–188 (GHFGMPEL). The chain crosses the membrane as a helical span at residues 189–209 (GGVGCGVATAAVYWVMFLAMV). The Cytoplasmic portion of the chain corresponds to 210 to 242 (SYIKRARSMRDIRNEKGTAKPDPAVMKRLIQLG). Residues 243–263 (LPIALALFFEVTLFAVVALLV) traverse the membrane as a helical segment. The Periplasmic portion of the chain corresponds to 264–275 (SPLGIVDVAGHQ). A helical transmembrane segment spans residues 276–296 (IALNFSSLMFVLPMSLAAAVT). Over 297–313 (IRVGYRLGQGSTLDAQT) the chain is Cytoplasmic. The helical transmembrane segment at 314 to 334 (AARTGLMVGVCMATLTAIFTV) threads the bilayer. Residues 335–349 (SLREQIALLYNDNPE) lie on the Periplasmic side of the membrane. The chain crosses the membrane as a helical span at residues 350–370 (VVTLAAHLMLLAAVYQISDSI). At 371–386 (QVIGSGILRGYKDTRS) the chain is on the cytoplasmic side. Residues 387-407 (IFYITFTAYWVLGLPSGYILA) traverse the membrane as a helical segment. At 408–417 (LTDLVVEPMG) the chain is on the periplasmic side. A helical transmembrane segment spans residues 418 to 438 (PAGFWIGFIIGLTSAAIMMML). The Cytoplasmic portion of the chain corresponds to 439 to 457 (RMRFLQRMPSAIILQRASR).

The protein belongs to the multi antimicrobial extrusion (MATE) (TC 2.A.66.1) family. MdtK subfamily.

Its subcellular location is the cell inner membrane. In terms of biological role, multidrug efflux pump that functions probably as a Na(+)/drug antiporter. The chain is Multidrug resistance protein MdtK from Shigella boydii serotype 4 (strain Sb227).